Reading from the N-terminus, the 38-residue chain is Large ribosomal subunit protein bL36 (38 aa).

Belongs to the bacterial ribosomal protein bL36 family.

This Limosilactobacillus fermentum (strain NBRC 3956 / LMG 18251) (Lactobacillus fermentum) protein is Large ribosomal subunit protein bL36.